Here is a 174-residue protein sequence, read N- to C-terminus: UPF0664 stress-induced protein C29B12.11c (174 aa).

The tract at residues 147–174 is disordered; the sequence is HLDPLPPYHRPSSSQDQPPHYEEAVNKS. The segment covering 165–174 has biased composition (basic and acidic residues); it reads PHYEEAVNKS.

Belongs to the UPF0664 family.

It is found in the cytoplasm. The protein resides in the nucleus. The polypeptide is UPF0664 stress-induced protein C29B12.11c (Schizosaccharomyces pombe (strain 972 / ATCC 24843) (Fission yeast)).